The chain runs to 315 residues: CID domain-containing protein 1 (315 aa).

Residues 1 to 135 (MADFTEQTLR…RLHEVHQQVK (135 aa)) enclose the CID domain. A coiled-coil region spans residues 227–273 (MLEEYVKRLKNETNERETLESNLNMLIENVRMSIEHHEKLCREVKRR).

The sequence is that of CID domain-containing protein 1 (cids-1) from Caenorhabditis elegans.